We begin with the raw amino-acid sequence, 671 residues long: tRNA(Met) cytidine acetyltransferase TmcA (671 aa).

ATP is bound by residues Gln-180, 202-211 (GRGKSALAGQ), and Arg-319. Residues 349–531 (IRFSAFTQAL…SGCYTAMALL (183 aa)) enclose the N-acetyltransferase domain. Acetyl-CoA is bound by residues 461–463 (IAV), 468–474 (QREGIGQ), Glu-499, and Arg-506.

Belongs to the RNA cytidine acetyltransferase family. TmcA subfamily.

Its subcellular location is the cytoplasm. It catalyses the reaction cytidine(34) in elongator tRNA(Met) + acetyl-CoA + ATP + H2O = N(4)-acetylcytidine(34) in elongator tRNA(Met) + ADP + phosphate + CoA + H(+). Its function is as follows. Catalyzes the formation of N(4)-acetylcytidine (ac(4)C) at the wobble position of tRNA(Met), by using acetyl-CoA as an acetyl donor and ATP (or GTP). The polypeptide is tRNA(Met) cytidine acetyltransferase TmcA (Citrobacter koseri (strain ATCC BAA-895 / CDC 4225-83 / SGSC4696)).